We begin with the raw amino-acid sequence, 605 residues long: Dihydrogeodin oxidase (605 aa).

Residues 1 to 18 form the signal peptide; that stretch reads MPSLKDWVVAGLVPMTIA. Asn27, Asn107, and Asn112 each carry an N-linked (GlcNAc...) asparagine glycan. Plastocyanin-like domains lie at 65-183, 189-347, and 424-567; these read TVTQ…GPSS, DLGP…YDES, and YVDW…KIKP. Positions 117, 119, 161, and 163 each coordinate Cu cation. Asn278 and Asn467 each carry an N-linked (GlcNAc...) asparagine glycan. Cu cation contacts are provided by His484, His487, His489, His543, Cys544, His545, and His549.

This sequence belongs to the multicopper oxidase family. Requires Cu cation as cofactor.

The catalysed reaction is 2 dihydrogeodin + O2 + 2 H(+) = 2 (+)-geodin + 2 H2O. It participates in secondary metabolite biosynthesis. Functionally, dihydrogeodin oxidase; part of the gene cluster that mediates the biosynthesis of geodin, an intermediate in the biosynthesis of other natural products. The pathway begins with the synthesis of atrochrysone thioester by the polyketide synthase (PKS) gedC. The atrochrysone carboxyl ACP thioesterase gedB then breaks the thioester bond and releases the atrochrysone carboxylic acid from gedC. The atrochrysone carboxylic acid is then converted to atrochrysone which is further transformed into emodinanthrone. The next step is performed by the emodinanthrone oxygenase gedH that catalyzes the oxidation of emodinanthrone to emodin. Emodin O-methyltransferase encoded probably by gedA then catalyzes methylation of the 8-hydroxy group of emodin to form questin. Ring cleavage of questin by questin oxidase gedK leads to desmethylsulochrin via several intermediates including questin epoxide. Another methylation step probably catalyzed by methyltransferase gedG leads to the formation of sulochrin which is further converted to dihydrogeodin by the sulochrin halogenase gedL. Finally, the dihydrogeodin oxidase gedJ catalyzes the stereospecific phenol oxidative coupling reaction converting dihydrogeodin to geodin. The polypeptide is Dihydrogeodin oxidase (Aspergillus terreus (strain NIH 2624 / FGSC A1156)).